The chain runs to 1057 residues: mRNA export factor elf1 (1057 aa).

ABC transporter domains follow at residues 440 to 659 (IEEE…VKPE) and 692 to 1019 (LKMT…KKKL). ATP is bound by residues 477-484 (GHNGCGKS) and 726-733 (GPNGAGKS). Serine 733 bears the Phosphoserine mark. The Chromo domain maps to 820–869 (RRVEALIGRQKLKKSFQYEIKWFGKPHKYNTWVSREILLENGFQKFVQAF). Positions 1020–1036 (TRNEIKAKERRAREREL) are enriched in basic and acidic residues. Residues 1020-1057 (TRNEIKAKERRARERELAWLQSPKGTEKPKSFFSDDEE) form a disordered region. Serine 1041 and serine 1053 each carry phosphoserine.

This sequence belongs to the ABC transporter superfamily. ABCF family. EF3 subfamily.

It is found in the cytoplasm. The protein resides in the nucleus. Its function is as follows. Has a direct role in the mRNA export process. Appears to act within the rae1 mediated mRNA export pathway. This is mRNA export factor elf1 (elf1) from Schizosaccharomyces pombe (strain 972 / ATCC 24843) (Fission yeast).